The primary structure comprises 64 residues: MAKAAKTIKVEQTRSAIRRQHSQRSTLVGLKLNKIGRVAELQDTPETRGMIAKVQHLVRVIDET.

A disordered region spans residues M1 to S22.

The protein belongs to the universal ribosomal protein uL30 family. Part of the 50S ribosomal subunit.

The protein is Large ribosomal subunit protein uL30 of Nitrobacter hamburgensis (strain DSM 10229 / NCIMB 13809 / X14).